A 189-amino-acid polypeptide reads, in one-letter code: PTS system glucose-specific EIIA component (189 aa).

The 105-residue stretch at 31–135 (DEAFAEKIVG…SVITPVVIAN (105 aa)) folds into the PTS EIIA type-1 domain. Zn(2+) contacts are provided by His68 and His83. His83 acts as the Tele-phosphohistidine intermediate; for EIIA activity in catalysis. His83 carries the post-translational modification Phosphohistidine; by HPr.

In terms of assembly, heterodimer with glycerol kinase (glpk). The cofactor is Zn(2+).

The protein resides in the cytoplasm. In terms of biological role, the phosphoenolpyruvate-dependent sugar phosphotransferase system (sugar PTS), a major carbohydrate active transport system, catalyzes the phosphorylation of incoming sugar substrates concomitantly with their translocation across the cell membrane. The enzyme II complex composed of PtsG and Crr is involved in glucose transport. This chain is PTS system glucose-specific EIIA component (crr), found in Borreliella burgdorferi (strain ATCC 35210 / DSM 4680 / CIP 102532 / B31) (Borrelia burgdorferi).